Consider the following 140-residue polypeptide: MAIERTFSMIKPDATRRNLTGAIIAKLEEAGLRVVASKRVWMSRREAEGFYAVHKDRPFFGELVEFMSSGPTVVQVLEGENAIAKNREVMGATNPANADEGTIRKAFALSIGENSVHGSDAPETAAEEIAYWFSGTEIVG.

6 residues coordinate ATP: K11, F59, R87, T93, R104, and N114. H117 acts as the Pros-phosphohistidine intermediate in catalysis.

It belongs to the NDK family. In terms of assembly, homotetramer. Requires Mg(2+) as cofactor.

The protein resides in the cytoplasm. The catalysed reaction is a 2'-deoxyribonucleoside 5'-diphosphate + ATP = a 2'-deoxyribonucleoside 5'-triphosphate + ADP. The enzyme catalyses a ribonucleoside 5'-diphosphate + ATP = a ribonucleoside 5'-triphosphate + ADP. Major role in the synthesis of nucleoside triphosphates other than ATP. The ATP gamma phosphate is transferred to the NDP beta phosphate via a ping-pong mechanism, using a phosphorylated active-site intermediate. In Brucella melitensis biotype 1 (strain ATCC 23456 / CCUG 17765 / NCTC 10094 / 16M), this protein is Nucleoside diphosphate kinase.